The primary structure comprises 666 residues: Protein translocase subunit SecA 2 (666 aa).

ATP-binding positions include glutamine 119, 137-141 (GEGKS), and aspartate 546.

The protein belongs to the SecA family. Monomer and homodimer. Part of the essential Sec protein translocation apparatus which comprises SecA, SecYEG and auxiliary proteins SecDF-YajC and YidC.

The protein resides in the cell inner membrane. It is found in the cytoplasm. It carries out the reaction ATP + H2O + cellular proteinSide 1 = ADP + phosphate + cellular proteinSide 2.. Its function is as follows. Part of the Sec protein translocase complex. Interacts with the SecYEG preprotein conducting channel. Has a central role in coupling the hydrolysis of ATP to the transfer of proteins into and across the cell membrane, serving both as a receptor for the preprotein-SecB complex and as an ATP-driven molecular motor driving the stepwise translocation of polypeptide chains across the membrane. This is Protein translocase subunit SecA 2 from Nitrosospira multiformis (strain ATCC 25196 / NCIMB 11849 / C 71).